We begin with the raw amino-acid sequence, 335 residues long: GTPase Obg (335 aa).

The region spanning 1 to 159 is the Obg domain; it reads MKFVDSASIR…REIGLELSIM (159 aa). The region spanning 160-332 is the OBG-type G domain; sequence ADIGLLGMPN…LVAGLFKLVK (173 aa). Residues 166–173, 191–195, 212–215, 282–285, and 313–315 each bind GTP; these read GMPNAGKS, FTTLH, DIPG, NKMD, and SAL. Positions 173 and 193 each coordinate Mg(2+).

It belongs to the TRAFAC class OBG-HflX-like GTPase superfamily. OBG GTPase family. As to quaternary structure, monomer. Mg(2+) is required as a cofactor.

It is found in the cytoplasm. An essential GTPase which binds GTP, GDP and possibly (p)ppGpp with moderate affinity, with high nucleotide exchange rates and a fairly low GTP hydrolysis rate. Plays a role in control of the cell cycle, stress response, ribosome biogenesis and in those bacteria that undergo differentiation, in morphogenesis control. The sequence is that of GTPase Obg from Ruthia magnifica subsp. Calyptogena magnifica.